Reading from the N-terminus, the 361-residue chain is Allatostatin-A receptor (361 aa).

The Extracellular portion of the chain corresponds to 1–46 (MESTEDEFYTICLNLTAEDPSFGNCNYTTDFENGELLEKVVSRVVP). Asparagine 14 and asparagine 26 each carry an N-linked (GlcNAc...) asparagine glycan. Residues 47 to 67 (IFFGFIGIVGLVGNALVVLVV) form a helical membrane-spanning segment. The Cytoplasmic segment spans residues 68-78 (AANPGMRSTTN). A helical transmembrane segment spans residues 79–99 (LLIINLAVADLLFVIFCVPFT). Residues 100–116 (ATDYVMPRWPFGDWWCK) lie on the Extracellular side of the membrane. Cysteine 115 and cysteine 196 form a disulfide bridge. Residues 117–137 (VVQYFIVVTAHASVYTLVLMS) form a helical membrane-spanning segment. The Cytoplasmic portion of the chain corresponds to 138-158 (LDRFMAVVHPIASMSIRTEKN). A helical membrane pass occupies residues 159 to 179 (ALLAIACIWVVILTTAIPVGI). Residues 180–212 (CHGEREYSYFNRNHSSCVFLEERGYSKLGFQMS) lie on the Extracellular side of the membrane. Asparagine 192 carries N-linked (GlcNAc...) asparagine glycosylation. Residues 213-233 (FFLSSYVIPLALISVLYMCML) traverse the membrane as a helical segment. Residues 234–259 (TRLWKSAPGGRVSAESRRGRKKVTRM) are Cytoplasmic-facing. Residues 260–280 (VVVVVVVFAVCWCPIQIILLV) form a helical membrane-spanning segment. Topologically, residues 281 to 296 (KALNKYHITYFTVTAQ) are extracellular. Residues 297-317 (IVSHVLAYMNSCVNPVLYAFL) form a helical membrane-spanning segment. Residues 318 to 361 (SENFRVAFRKVMYCPPPYNDGFSGRPQATKTTRTGNGNSCHDIV) lie on the Cytoplasmic side of the membrane. Residues 341-361 (GRPQATKTTRTGNGNSCHDIV) form a disordered region. Positions 343-361 (PQATKTTRTGNGNSCHDIV) are enriched in polar residues.

This sequence belongs to the G-protein coupled receptor 1 family. Expressed in the midgut and, to a lesser extent, in the fore- and hindgut of fifth instar larvae. Also highly expressed in the brain of fourth and fifth instar larvae.

It localises to the cell membrane. Its function is as follows. Acts as a receptor for A-type allatostatin neuropeptide hormones. The polypeptide is Allatostatin-A receptor (Bombyx mori (Silk moth)).